A 250-amino-acid chain; its full sequence is Ditrans,polycis-undecaprenyl-diphosphate synthase ((2E,6E)-farnesyl-diphosphate specific) (250 aa).

The active site involves Asp-27. Position 27 (Asp-27) interacts with Mg(2+). Substrate-binding positions include 28 to 31, Trp-32, Arg-40, His-44, and 72 to 74; these read GNGR and SSE. The active-site Proton acceptor is the Asn-75. Residues Trp-76, Arg-78, and Arg-195 each contribute to the substrate site. His-200 lines the Mg(2+) pocket. 201–203 serves as a coordination point for substrate; it reads RIS. Glu-214 lines the Mg(2+) pocket.

Belongs to the UPP synthase family. In terms of assembly, homodimer. It depends on Mg(2+) as a cofactor.

It catalyses the reaction 8 isopentenyl diphosphate + (2E,6E)-farnesyl diphosphate = di-trans,octa-cis-undecaprenyl diphosphate + 8 diphosphate. Its function is as follows. Catalyzes the sequential condensation of isopentenyl diphosphate (IPP) with (2E,6E)-farnesyl diphosphate (E,E-FPP) to yield (2Z,6Z,10Z,14Z,18Z,22Z,26Z,30Z,34E,38E)-undecaprenyl diphosphate (di-trans,octa-cis-UPP). UPP is the precursor of glycosyl carrier lipid in the biosynthesis of bacterial cell wall polysaccharide components such as peptidoglycan and lipopolysaccharide. This is Ditrans,polycis-undecaprenyl-diphosphate synthase ((2E,6E)-farnesyl-diphosphate specific) from Blochmanniella floridana.